The sequence spans 418 residues: Centromere protein U (418 aa).

Over residues 1 to 11 the composition is skewed to basic residues; that stretch reads MAPRGRRRPRP. Residues 1 to 76 form a disordered region; the sequence is MAPRGRRRPR…TYETFDPPLH (76 aa). The Nuclear localization signal signature appears at 6 to 23; it reads RRRPRPHRSEGARRSKNT. Over residues 12–42 the composition is skewed to basic and acidic residues; that stretch reads HRSEGARRSKNTLERTHSMKDKAGQKCKPID. At threonine 78 the chain carries Phosphothreonine; by PLK1. Residues 88 to 227 form a disordered region; the sequence is SKHCGLSLSS…KRKKSRSKAI (140 aa). The residue at position 98 (threonine 98) is a Phosphothreonine. Serine 108 carries the phosphoserine modification. Position 110 is a phosphothreonine (threonine 110). Phosphoserine is present on residues serine 111, serine 116, and serine 120. A compositionally biased stretch (basic residues) spans 124 to 133; sequence SAKKPGRKLR. Residues serine 136, serine 139, and serine 141 each carry the phosphoserine modification. Over residues 145–165 the composition is skewed to basic and acidic residues; it reads SDTRRKVKSAEKISTQRHEVI. Residues 180–193 show a composition bias toward polar residues; it reads SVTSKKTGPLSAQP. Lysine 185 participates in a covalent cross-link: Glycyl lysine isopeptide (Lys-Gly) (interchain with G-Cter in SUMO2). Residues serine 190 and serine 194 each carry the phosphoserine modification. The segment covering 208 to 224 has biased composition (basic residues); sequence TQKKGKISHDKRKKSRS. The residue at position 232 (serine 232) is a Phosphoserine. 2 coiled-coil regions span residues 297–356 and 397–417; these read QMLT…NAAY and LLGA…LLDQ. A Nuclear localization signal motif is present at residues 303–320; the sequence is KRKNAKMISDIEKKRQRM.

Belongs to the CENP-U/AME1 family. Component of the CENPA-NAC complex, at least composed of CENPA, CENPC, CENPH, CENPM, CENPN, CENPT and CENPU. The CENPA-NAC complex interacts with the CENPA-CAD complex, composed of CENPI, CENPK, CENPL, CENPO, CENPP, CENPQ, CENPR and CENPS. Interacts with MLF1. Interacts with PLK1. As to quaternary structure, (Microbial infection) Interacts with the N-terminal domain of Kaposi's sarcoma-associated herpesvirus latent nuclear antigen (LNA). In terms of processing, phosphorylated by PLK1 at Thr-78, creating a self-tethering site that specifically interacts with the polo-box domain of PLK1. As to expression, expressed at high levels in the testis, fetal liver, thymus, bone marrow and at lower levels in the lymph nodes, placenta, colon and spleen. Present in all cell lines examined, including B-cells, T-cells, epithelial cells and fibroblast cells. Expressed at high levels in glioblastoma cell lines.

Its subcellular location is the cytoplasm. It is found in the nucleus. The protein localises to the chromosome. It localises to the centromere. The protein resides in the kinetochore. Its function is as follows. Component of the CENPA-NAC (nucleosome-associated) complex, a complex that plays a central role in assembly of kinetochore proteins, mitotic progression and chromosome segregation. The CENPA-NAC complex recruits the CENPA-CAD (nucleosome distal) complex and may be involved in incorporation of newly synthesized CENPA into centromeres. Plays an important role in the correct PLK1 localization to the mitotic kinetochores. A scaffold protein responsible for the initial recruitment and maintenance of the kinetochore PLK1 population until its degradation. Involved in transcriptional repression. The sequence is that of Centromere protein U (CENPU) from Homo sapiens (Human).